Reading from the N-terminus, the 273-residue chain is Shikimate dehydrogenase (NADP(+)) (273 aa).

Shikimate is bound by residues 18 to 20 (SKS) and Thr-65. The active-site Proton acceptor is Lys-69. Residue Glu-81 participates in NADP(+) binding. Asn-90 and Asp-105 together coordinate shikimate. Residues 130-134 (GAGGA), 154-159 (NRTHSK), and Met-217 each bind NADP(+). Tyr-219 serves as a coordination point for shikimate. Gly-240 lines the NADP(+) pocket.

Belongs to the shikimate dehydrogenase family. As to quaternary structure, homodimer.

The enzyme catalyses shikimate + NADP(+) = 3-dehydroshikimate + NADPH + H(+). It functions in the pathway metabolic intermediate biosynthesis; chorismate biosynthesis; chorismate from D-erythrose 4-phosphate and phosphoenolpyruvate: step 4/7. Functionally, involved in the biosynthesis of the chorismate, which leads to the biosynthesis of aromatic amino acids. Catalyzes the reversible NADPH linked reduction of 3-dehydroshikimate (DHSA) to yield shikimate (SA). This chain is Shikimate dehydrogenase (NADP(+)), found in Herminiimonas arsenicoxydans.